The chain runs to 748 residues: Photosystem I P700 chlorophyll a apoprotein A1 (748 aa).

A run of 8 helical transmembrane segments spans residues 70 to 93 (VFSA…FHGA), 156 to 179 (LYST…YHYH), 195 to 219 (LNHH…HVSL), 291 to 309 (TAHH…GHQY), 346 to 369 (WHAQ…HHMY), 385 to 411 (LSLF…IFLV), 433 to 455 (AIIS…LYIH), and 530 to 548 (FLVH…LILL). [4Fe-4S] cluster-binding residues include cysteine 572 and cysteine 581. 2 helical membrane passes run 588-609 (HVFL…HFSW) and 662-684 (LSAY…MFLF). Histidine 673 lines the chlorophyll a' pocket. Residues methionine 681 and tyrosine 689 each coordinate chlorophyll a. Tryptophan 690 is a phylloquinone binding site. Residues 722-742 (AVGVAHYLLGGIATTWAFFLA) traverse the membrane as a helical segment.

This sequence belongs to the PsaA/PsaB family. The PsaA/B heterodimer binds the P700 chlorophyll special pair and subsequent electron acceptors. PSI consists of a core antenna complex that captures photons, and an electron transfer chain that converts photonic excitation into a charge separation. The eukaryotic PSI reaction center is composed of at least 11 subunits. P700 is a chlorophyll a/chlorophyll a' dimer, A0 is one or more chlorophyll a, A1 is one or both phylloquinones and FX is a shared 4Fe-4S iron-sulfur center. serves as cofactor.

It is found in the plastid. Its subcellular location is the chloroplast thylakoid membrane. It carries out the reaction reduced [plastocyanin] + hnu + oxidized [2Fe-2S]-[ferredoxin] = oxidized [plastocyanin] + reduced [2Fe-2S]-[ferredoxin]. PsaA and PsaB bind P700, the primary electron donor of photosystem I (PSI), as well as the electron acceptors A0, A1 and FX. PSI is a plastocyanin-ferredoxin oxidoreductase, converting photonic excitation into a charge separation, which transfers an electron from the donor P700 chlorophyll pair to the spectroscopically characterized acceptors A0, A1, FX, FA and FB in turn. Oxidized P700 is reduced on the lumenal side of the thylakoid membrane by plastocyanin. The protein is Photosystem I P700 chlorophyll a apoprotein A1 of Chaetosphaeridium globosum (Charophycean green alga).